We begin with the raw amino-acid sequence, 561 residues long: MNINVADLLNGNYILLLFVVLALGLCLGKLRLGSVQLGNSIGVLVVSLLLGQQHFSINTDALNLGFMLFIFCVGVEAGPNFFSIFFRDGKNYLMLALVMVGSALLIALGLGKLFGWDIGLTAGMLAGSMTSTPVLVGAGDTLRHSGIASTQLSSALDNLSLGYALTYLIGLVSLIVGARYLPKLQHQDLQTSAQQIARERGLDTDANRKVYLPVIRAYRVGPELVAWTDGKNLRELGIYRQTGCYIERIRRNGILANPDGDAVLQMGDEIALVGYPDAHARLDPSFRNGKEVFDRDLLDMRIVTEEIVVKNHNAVGRRLAQLKLTDHGCFLNRVIRSQIEMPIDDNVVLNKGDVLQVSGDARRVKTIADRIGFISIHSQVTDLLAFCAFFIIGLMIGMITFQFSNFSFGIGNAAGLLFAGIMLGFLRANHPTFGYIPQGALNMVKEFGLMVFMAGVGLSAGSGISNGLGAVGGQMLIAGLVVSLVPVVICFLFGAYVLRMNRALLFGAMMGARTCAPAMEIISDTARSNIPALGYAGTYAIANVLLTLAGTLIVIIWPGLG.

Transmembrane regions (helical) follow at residues leucine 8–glycine 28, leucine 32–glutamine 52, phenylalanine 66–phenylalanine 86, methionine 94–phenylalanine 114, and asparagine 158–alanine 178. RCK C-terminal domains are found at residues arginine 200–asparagine 288 and valine 292–phenylalanine 373. The next 5 helical transmembrane spans lie at leucine 383–phenylalanine 403, phenylalanine 406–leucine 426, phenylalanine 447–glycine 467, methionine 475–alanine 495, and alanine 540–leucine 560.

The protein belongs to the AAE transporter (TC 2.A.81) family. YbjL subfamily.

It localises to the cell membrane. This chain is Putative transport protein YbjL, found in Salmonella agona (strain SL483).